Reading from the N-terminus, the 738-residue chain is Ent-kaurene synthase-like 1 (738 aa).

Mg(2+) is bound by residues aspartate 487, aspartate 491, asparagine 631, aspartate 632, and glutamate 639. The DDXXD motif signature appears at aspartate 487 to aspartate 491.

Belongs to the terpene synthase family. Mg(2+) is required as a cofactor.

It carries out the reaction ent-copalyl diphosphate = ent-kaur-16-ene + diphosphate. Its pathway is secondary metabolite biosynthesis; terpenoid biosynthesis. Functionally, diterpene cyclase involved in the biosynthesis of labdane-related diterpenoids (LRDs) natural products. Catalyzes the cyclization of ent-CDP into ent-kaurene. This is Ent-kaurene synthase-like 1 from Ricinus communis (Castor bean).